Here is a 201-residue protein sequence, read N- to C-terminus: dITP/XTP pyrophosphatase (201 aa).

Position 7–12 (7–12) interacts with substrate; the sequence is TNNKGK. Mg(2+) contacts are provided by glutamate 40 and aspartate 69. Aspartate 69 serves as the catalytic Proton acceptor. Residues serine 70, 152 to 155, lysine 175, and 180 to 181 contribute to the substrate site; these read FGYD and HR.

The protein belongs to the HAM1 NTPase family. In terms of assembly, homodimer. Mg(2+) serves as cofactor.

It catalyses the reaction XTP + H2O = XMP + diphosphate + H(+). It carries out the reaction dITP + H2O = dIMP + diphosphate + H(+). The catalysed reaction is ITP + H2O = IMP + diphosphate + H(+). Pyrophosphatase that catalyzes the hydrolysis of nucleoside triphosphates to their monophosphate derivatives, with a high preference for the non-canonical purine nucleotides XTP (xanthosine triphosphate), dITP (deoxyinosine triphosphate) and ITP. Seems to function as a house-cleaning enzyme that removes non-canonical purine nucleotides from the nucleotide pool, thus preventing their incorporation into DNA/RNA and avoiding chromosomal lesions. The sequence is that of dITP/XTP pyrophosphatase from Desulforamulus reducens (strain ATCC BAA-1160 / DSM 100696 / MI-1) (Desulfotomaculum reducens).